The primary structure comprises 700 residues: Elongation factor G (700 aa).

A tr-type G domain is found at 8-290 (ERYRNIGISA…AVIDYLPAPT (283 aa)). GTP-binding positions include 17-24 (AHIDAGKT), 88-92 (DTPGH), and 142-145 (NKMD).

Belongs to the TRAFAC class translation factor GTPase superfamily. Classic translation factor GTPase family. EF-G/EF-2 subfamily.

The protein localises to the cytoplasm. Functionally, catalyzes the GTP-dependent ribosomal translocation step during translation elongation. During this step, the ribosome changes from the pre-translocational (PRE) to the post-translocational (POST) state as the newly formed A-site-bound peptidyl-tRNA and P-site-bound deacylated tRNA move to the P and E sites, respectively. Catalyzes the coordinated movement of the two tRNA molecules, the mRNA and conformational changes in the ribosome. This chain is Elongation factor G (fusA), found in Pasteurella multocida (strain Pm70).